The following is a 156-amino-acid chain: ATP synthase subunit b (156 aa).

Residues 12-32 (VAFLIFVLFCMKFIWPPVIAA) form a helical membrane-spanning segment.

The protein belongs to the ATPase B chain family. F-type ATPases have 2 components, F(1) - the catalytic core - and F(0) - the membrane proton channel. F(1) has five subunits: alpha(3), beta(3), gamma(1), delta(1), epsilon(1). F(0) has three main subunits: a(1), b(2) and c(10-14). The alpha and beta chains form an alternating ring which encloses part of the gamma chain. F(1) is attached to F(0) by a central stalk formed by the gamma and epsilon chains, while a peripheral stalk is formed by the delta and b chains.

It localises to the cell inner membrane. Its function is as follows. F(1)F(0) ATP synthase produces ATP from ADP in the presence of a proton or sodium gradient. F-type ATPases consist of two structural domains, F(1) containing the extramembraneous catalytic core and F(0) containing the membrane proton channel, linked together by a central stalk and a peripheral stalk. During catalysis, ATP synthesis in the catalytic domain of F(1) is coupled via a rotary mechanism of the central stalk subunits to proton translocation. Functionally, component of the F(0) channel, it forms part of the peripheral stalk, linking F(1) to F(0). This chain is ATP synthase subunit b, found in Pseudomonas fluorescens (strain ATCC BAA-477 / NRRL B-23932 / Pf-5).